Here is a 416-residue protein sequence, read N- to C-terminus: Gamma-glutamyl phosphate reductase (416 aa).

Belongs to the gamma-glutamyl phosphate reductase family.

The protein resides in the cytoplasm. The catalysed reaction is L-glutamate 5-semialdehyde + phosphate + NADP(+) = L-glutamyl 5-phosphate + NADPH + H(+). The protein operates within amino-acid biosynthesis; L-proline biosynthesis; L-glutamate 5-semialdehyde from L-glutamate: step 2/2. Catalyzes the NADPH-dependent reduction of L-glutamate 5-phosphate into L-glutamate 5-semialdehyde and phosphate. The product spontaneously undergoes cyclization to form 1-pyrroline-5-carboxylate. The polypeptide is Gamma-glutamyl phosphate reductase (Vibrio cholerae serotype O1 (strain ATCC 39541 / Classical Ogawa 395 / O395)).